A 480-amino-acid polypeptide reads, in one-letter code: Heparin cofactor 2 (480 aa).

The first 19 residues, 1–19, serve as a signal peptide directing secretion; it reads MQHRPHLLLISLTIMSVCG. An N-linked (GlcNAc...) asparagine glycan is attached at N32. 2 tandem repeats follow at residues 56–66 and 70–80. Residues 56–80 are 2 X 11 AA approximate repeats, Asp/Glu-rich (acidic) (hirudin-like); the sequence is GEEDDDYLDLEKLLSEDDDYIDIID. A sulfotyrosine mark is found at Y62 and Y75. The N-linked (GlcNAc...) asparagine glycan is linked to N169. The tract at residues 173 to 193 is glycosaminoglycan-binding site; sequence KYEILTIHNLFRKLTHRLFRR. N-linked (GlcNAc...) asparagine glycosylation is found at N368 and N404.

The protein belongs to the serpin family. In terms of processing, N-glycosylated; different glycan composition appears to lead to two forms of this protein (56 and 60 kDa).

Thrombin inhibitor activated by the glycosaminoglycans, heparin or dermatan sulfate. In the presence of the latter, HC-II becomes the predominant thrombin inhibitor in place of antithrombin III (AT). This chain is Heparin cofactor 2 (SERPIND1), found in Oryctolagus cuniculus (Rabbit).